The sequence spans 578 residues: Phenylalanine--tRNA ligase beta subunit (578 aa).

The B5 domain occupies 292-370; that stretch reads FDTDEKSVSH…RAYGFDNLEP (79 aa). Mg(2+) contacts are provided by D348, D354, D357, and D358.

This sequence belongs to the phenylalanyl-tRNA synthetase beta subunit family. Type 2 subfamily. As to quaternary structure, tetramer of two alpha and two beta subunits. It depends on Mg(2+) as a cofactor.

It localises to the cytoplasm. It catalyses the reaction tRNA(Phe) + L-phenylalanine + ATP = L-phenylalanyl-tRNA(Phe) + AMP + diphosphate + H(+). The protein is Phenylalanine--tRNA ligase beta subunit of Halorubrum lacusprofundi (strain ATCC 49239 / DSM 5036 / JCM 8891 / ACAM 34).